Reading from the N-terminus, the 204-residue chain is Thiamine-phosphate synthase (204 aa).

4-amino-2-methyl-5-(diphosphooxymethyl)pyrimidine-binding positions include 35-39 (QVREK) and N67. D68 and D87 together coordinate Mg(2+). S106 contributes to the 4-amino-2-methyl-5-(diphosphooxymethyl)pyrimidine binding site. 132–134 (TPT) serves as a coordination point for 2-[(2R,5Z)-2-carboxy-4-methylthiazol-5(2H)-ylidene]ethyl phosphate. 4-amino-2-methyl-5-(diphosphooxymethyl)pyrimidine is bound at residue K135. Residues G163 and 183–184 (VS) each bind 2-[(2R,5Z)-2-carboxy-4-methylthiazol-5(2H)-ylidene]ethyl phosphate.

Belongs to the thiamine-phosphate synthase family. The cofactor is Mg(2+).

It catalyses the reaction 2-[(2R,5Z)-2-carboxy-4-methylthiazol-5(2H)-ylidene]ethyl phosphate + 4-amino-2-methyl-5-(diphosphooxymethyl)pyrimidine + 2 H(+) = thiamine phosphate + CO2 + diphosphate. It carries out the reaction 2-(2-carboxy-4-methylthiazol-5-yl)ethyl phosphate + 4-amino-2-methyl-5-(diphosphooxymethyl)pyrimidine + 2 H(+) = thiamine phosphate + CO2 + diphosphate. The enzyme catalyses 4-methyl-5-(2-phosphooxyethyl)-thiazole + 4-amino-2-methyl-5-(diphosphooxymethyl)pyrimidine + H(+) = thiamine phosphate + diphosphate. It participates in cofactor biosynthesis; thiamine diphosphate biosynthesis; thiamine phosphate from 4-amino-2-methyl-5-diphosphomethylpyrimidine and 4-methyl-5-(2-phosphoethyl)-thiazole: step 1/1. Its function is as follows. Condenses 4-methyl-5-(beta-hydroxyethyl)thiazole monophosphate (THZ-P) and 2-methyl-4-amino-5-hydroxymethyl pyrimidine pyrophosphate (HMP-PP) to form thiamine monophosphate (TMP). This chain is Thiamine-phosphate synthase, found in Vibrio campbellii (strain ATCC BAA-1116).